A 65-amino-acid chain; its full sequence is Large ribosomal subunit protein bL35c (65 aa).

Positions 25 to 44 (HKASKSHLLQKKSSKQRRHL) are enriched in basic residues. Residues 25 to 45 (HKASKSHLLQKKSSKQRRHLS) form a disordered region.

It belongs to the bacterial ribosomal protein bL35 family.

Its subcellular location is the plastid. The protein localises to the chloroplast. The sequence is that of Large ribosomal subunit protein bL35c from Pyropia yezoensis (Susabi-nori).